A 322-amino-acid chain; its full sequence is FAD-dependent monooxygenase subE (322 aa).

FAD contacts are provided by E35, G49, R108, and D313.

It belongs to the paxM FAD-dependent monooxygenase family. FAD serves as cofactor.

Its pathway is secondary metabolite biosynthesis; terpenoid biosynthesis. In terms of biological role, FAD-dependent monooxygenase; part of the gene cluster that mediates the biosynthesis of the immunosuppressants subglutinols, meroterpenoids consisting of an alpha-pyrone (4-hydroxy-5,6-dimethyl-2-pyrone) moiety attached to a decalin core fused to a five-membered cyclic ether carrying a prenylside chain. The first step of the pathway is the synthesis of the alpha-pyrone moiety by the polyketide synthase subA via condensation of one acetyl-CoA starter unit with 3 malonyl-CoA units and 2 methylations. The alpha-pyrone is then combined with geranylgeranyl pyrophosphate (GGPP) formed by the GGPP synthase subD through the action of the prenyltransferase subC to yield a linear alpha-pyrone diterpenoid. Subsequent steps in the subglutinol biosynthetic pathway involve the decalin core formation, which is thought to be initiated by the epoxidation of the C10-C11 olefin by the FAD-dependent oxidoreductase subE. The following cyclization cascade would be catalyzed by the terpene cyclase subB. Lastly, the FAD-dependent dehydrogenase subF probably catalyzes the five-membered cyclic ether formation to complete the formation of subglutinol A. Subsequent redox reactions appear to give rise to subglutinol C and D, however, it remains unclear which enzymes are responsible for these transformations. SubD may have secondary function in the conversion of the identified subglutinols to subglutinol analog 45, which seems to be the major product of the cluster. The chain is FAD-dependent monooxygenase subE from Metarhizium robertsii (strain ARSEF 23 / ATCC MYA-3075) (Metarhizium anisopliae (strain ARSEF 23)).